The sequence spans 171 residues: Disulfide bond formation protein B (171 aa).

The Cytoplasmic segment spans residues 1 to 13; that stretch reads MSALTRFAQSRLA. Residues 14-30 form a helical membrane-spanning segment; the sequence is WTLLLLTAVGLEACALF. Over 31–48 the chain is Periplasmic; that stretch reads FQHVMKLDPCVMCIYQRL. A disulfide bond links C40 and C43. Residues 49 to 64 form a helical membrane-spanning segment; that stretch reads AVLGVLTAGLIGVVGH. At 65–71 the chain is on the cytoplasmic side; sequence QFRLLRF. The helical transmembrane segment at 72–89 threads the bilayer; sequence LGVLLWGVSAAWGLKLAL. Over 90–144 the chain is Periplasmic; that stretch reads ELVEMQTNPSPFSTCSFLPEFPEWMPLHEWFPSVFLPTGMCTDIPWEMFGITMSQ. C104 and C130 are joined by a disulfide. The chain crosses the membrane as a helical span at residues 145-163; the sequence is WMVVAFSTYLIALVVFIVP. Topologically, residues 164–171 are cytoplasmic; the sequence is ALMPTKKA.

It belongs to the DsbB family.

The protein localises to the cell inner membrane. Required for disulfide bond formation in some periplasmic proteins. Acts by oxidizing the DsbA protein. This chain is Disulfide bond formation protein B, found in Shewanella loihica (strain ATCC BAA-1088 / PV-4).